The chain runs to 22 residues: Brevinin-1OKa (22 aa).

K22 bears the Lysine amide mark.

Expressed by the skin glands.

The protein resides in the secreted. Its function is as follows. Antimicrobial peptide. Active against Gram-negative bacterium E.coli (MIC=12.5 uM) and against Gram-positive bacterium S.aureus (MIC=12.5 uM). In Nidirana okinavana (Kampira Falls frog), this protein is Brevinin-1OKa.